The chain runs to 428 residues: UDP-N-acetylglucosamine 1-carboxyvinyltransferase (428 aa).

Residue 25-26 (KN) participates in phosphoenolpyruvate binding. R102 is a binding site for UDP-N-acetyl-alpha-D-glucosamine. C126 functions as the Proton donor in the catalytic mechanism. A 2-(S-cysteinyl)pyruvic acid O-phosphothioketal modification is found at C126. Residues D316 and V338 each coordinate UDP-N-acetyl-alpha-D-glucosamine.

This sequence belongs to the EPSP synthase family. MurA subfamily.

The protein resides in the cytoplasm. It catalyses the reaction phosphoenolpyruvate + UDP-N-acetyl-alpha-D-glucosamine = UDP-N-acetyl-3-O-(1-carboxyvinyl)-alpha-D-glucosamine + phosphate. It functions in the pathway cell wall biogenesis; peptidoglycan biosynthesis. In terms of biological role, cell wall formation. Adds enolpyruvyl to UDP-N-acetylglucosamine. This chain is UDP-N-acetylglucosamine 1-carboxyvinyltransferase, found in Anaplasma marginale (strain Florida).